Here is a 221-residue protein sequence, read N- to C-terminus: DNA mismatch repair protein MutH (221 aa).

The protein belongs to the MutH family.

It localises to the cytoplasm. Its function is as follows. Sequence-specific endonuclease that cleaves unmethylated GATC sequences. It is involved in DNA mismatch repair. In Vibrio cholerae serotype O1 (strain ATCC 39541 / Classical Ogawa 395 / O395), this protein is DNA mismatch repair protein MutH.